The chain runs to 279 residues: Bis(5'-nucleosyl)-tetraphosphatase, symmetrical (279 aa).

Belongs to the Ap4A hydrolase family.

It carries out the reaction P(1),P(4)-bis(5'-adenosyl) tetraphosphate + H2O = 2 ADP + 2 H(+). Hydrolyzes diadenosine 5',5'''-P1,P4-tetraphosphate to yield ADP. The protein is Bis(5'-nucleosyl)-tetraphosphatase, symmetrical of Edwardsiella ictaluri (strain 93-146).